The sequence spans 1915 residues: Cysteine repeat modular protein 2 (1915 aa).

Positions 1–23 are cleaved as a signal peptide; it reads MKFKKELINILALIFVLKKNIFA. FU repeat units follow at residues 53–98, 104–151, 161–208, 210–263, and 267–315; these read LGLC…QTYV, SCIC…GYTQ, QLLC…LQYK, NGIC…GYVV, and TQRC…GNYQ. N138 carries an N-linked (GlcNAc...) asparagine glycan. N274, N279, and N316 each carry an N-linked (GlcNAc...) asparagine glycan. FU repeat units lie at residues 317–362, 373–422, 427–492, 496–546, and 554–602; these read SSLC…GFYT, QPIC…QTYY, TRSC…GFYQ, NNSC…SQNN, and TQAC…GTYM. N409 is a glycosylation site (N-linked (GlcNAc...) asparagine). N-linked (GlcNAc...) asparagine glycans are attached at residues N496, N572, N603, and N621. FU repeat units lie at residues 606 to 639, 640 to 686, and 690 to 739; these read TNQC…LQQN, YNVC…GFYV, and QQAC…NECL. N-linked (GlcNAc...) asparagine glycosylation occurs at N742. FU repeat units follow at residues 760 to 814 and 818 to 865; these read DGQC…GFYY and NKQC…GYYQ. 5 N-linked (GlcNAc...) asparagine glycosylation sites follow: N909, N930, N1051, N1085, and N1193. In terms of domain architecture, EGF-like spans 1184-1224; that stretch reads VQIPCDSNINCSGNGKCLWSQDNYNEILCICNINYAGRYCE. 3 disulfides stabilise this stretch: C1188–C1200, C1194–C1212, and C1214–C1223. N1250, N1297, N1519, N1546, N1554, N1580, and N1596 each carry an N-linked (GlcNAc...) asparagine glycan. 5 helical membrane-spanning segments follow: residues 1599-1619, 1662-1682, 1704-1724, 1763-1783, and 1796-1816; these read LLYA…ISII, YAQL…VYSL, STSV…VNLF, GLVF…ILSF, and FASF…FCFI. Residue N1867 is glycosylated (N-linked (GlcNAc...) asparagine).

It is found in the membrane. In terms of biological role, required for mucocyst secretion. In Tetrahymena thermophila (strain SB210), this protein is Cysteine repeat modular protein 2.